Consider the following 245-residue polypeptide: 5-oxoprolinase subunit A (245 aa).

This sequence belongs to the LamB/PxpA family. In terms of assembly, forms a complex composed of PxpA, PxpB and PxpC.

The enzyme catalyses 5-oxo-L-proline + ATP + 2 H2O = L-glutamate + ADP + phosphate + H(+). Functionally, catalyzes the cleavage of 5-oxoproline to form L-glutamate coupled to the hydrolysis of ATP to ADP and inorganic phosphate. The sequence is that of 5-oxoprolinase subunit A from Serratia proteamaculans (strain 568).